The chain runs to 120 residues: Flagellar protein FliT (120 aa).

Positions 1-50 (MNDFISSLNNWQALYALSNTMLSLANSGQWDELIEQEVKYVTLVEAIARN) are required for homodimerization. Positions 59 to 97 (FQEKARELLTKVLANEAALKIKLQARMEELRVLIEQNGN) are fliD binding.

It belongs to the FliT family. As to quaternary structure, homodimer. Interacts with FliD and FlhC.

It is found in the cytoplasm. The protein localises to the cytosol. Its function is as follows. Dual-function protein that regulates the transcription of class 2 flagellar operons and that also acts as an export chaperone for the filament-capping protein FliD. As a transcriptional regulator, acts as an anti-FlhDC factor; it directly binds FlhC, thus inhibiting the binding of the FlhC/FlhD complex to class 2 promoters, resulting in decreased expression of class 2 flagellar operons. As a chaperone, effects FliD transition to the membrane by preventing its premature polymerization, and by directing it to the export apparatus. The sequence is that of Flagellar protein FliT from Cronobacter sakazakii (strain ATCC BAA-894) (Enterobacter sakazakii).